A 1368-amino-acid chain; its full sequence is DNA-directed RNA polymerase subunit beta (1368 aa).

The protein belongs to the RNA polymerase beta chain family. In terms of assembly, the RNAP catalytic core consists of 2 alpha, 1 beta, 1 beta' and 1 omega subunit. When a sigma factor is associated with the core the holoenzyme is formed, which can initiate transcription.

The catalysed reaction is RNA(n) + a ribonucleoside 5'-triphosphate = RNA(n+1) + diphosphate. DNA-dependent RNA polymerase catalyzes the transcription of DNA into RNA using the four ribonucleoside triphosphates as substrates. The chain is DNA-directed RNA polymerase subunit beta from Cupriavidus metallidurans (strain ATCC 43123 / DSM 2839 / NBRC 102507 / CH34) (Ralstonia metallidurans).